We begin with the raw amino-acid sequence, 212 residues long: Methylthioribulose-1-phosphate dehydratase (212 aa).

Zn(2+)-binding residues include His97 and His99.

The protein belongs to the aldolase class II family. MtnB subfamily. As to quaternary structure, homotetramer. Zn(2+) is required as a cofactor.

The enzyme catalyses 5-(methylsulfanyl)-D-ribulose 1-phosphate = 5-methylsulfanyl-2,3-dioxopentyl phosphate + H2O. It functions in the pathway amino-acid biosynthesis; L-methionine biosynthesis via salvage pathway; L-methionine from S-methyl-5-thio-alpha-D-ribose 1-phosphate: step 2/6. Its function is as follows. Catalyzes the dehydration of methylthioribulose-1-phosphate (MTRu-1-P) into 2,3-diketo-5-methylthiopentyl-1-phosphate (DK-MTP-1-P). This is Methylthioribulose-1-phosphate dehydratase from Bacillus cytotoxicus (strain DSM 22905 / CIP 110041 / 391-98 / NVH 391-98).